Consider the following 452-residue polypeptide: Alkane uptake protein A (452 aa).

Positions 1–36 (MSERSVYMVLSPRFSVRAVSLAVAAVSASLSMPTSA) are cleaved as a signal peptide.

The protein belongs to the OmpP1/FadL family. As to quaternary structure, interacts with the inner membrane protein AupB.

It localises to the cell outer membrane. Functionally, required for growth on alkanes. Probably involved in the uptake of micelle-solubilized alkanes. The sequence is that of Alkane uptake protein A from Marinobacter nauticus (strain ATCC 49840 / DSM 8798 / CIP 103578 / SP17) (Marinobacter hydrocarbonoclasticus).